A 456-amino-acid chain; its full sequence is Phosphomethylpyrimidine synthase (456 aa).

Substrate is bound by residues asparagine 80, methionine 109, tyrosine 139, histidine 175, 195–197, 236–239, and glutamate 275; these read SRG and DSLR. Position 279 (histidine 279) interacts with Zn(2+). A substrate-binding site is contributed by tyrosine 302. Histidine 343 serves as a coordination point for Zn(2+). [4Fe-4S] cluster is bound by residues cysteine 423, cysteine 426, and cysteine 431.

The protein belongs to the ThiC family. It depends on [4Fe-4S] cluster as a cofactor.

The catalysed reaction is 5-amino-1-(5-phospho-beta-D-ribosyl)imidazole + S-adenosyl-L-methionine = 4-amino-2-methyl-5-(phosphooxymethyl)pyrimidine + CO + 5'-deoxyadenosine + formate + L-methionine + 3 H(+). Its pathway is cofactor biosynthesis; thiamine diphosphate biosynthesis. In terms of biological role, catalyzes the synthesis of the hydroxymethylpyrimidine phosphate (HMP-P) moiety of thiamine from aminoimidazole ribotide (AIR) in a radical S-adenosyl-L-methionine (SAM)-dependent reaction. The protein is Phosphomethylpyrimidine synthase of Prochlorococcus marinus (strain MIT 9301).